A 706-amino-acid chain; its full sequence is Probable rhamnogalacturonate lyase B (706 aa).

The N-terminal stretch at 1-19 (MRLLHPLIPASLLLTLTSA) is a signal peptide. 10 N-linked (GlcNAc...) asparagine glycosylation sites follow: Asn27, Asn40, Asn143, Asn239, Asn285, Asn380, Asn495, Asn569, Asn597, and Asn638.

It belongs to the polysaccharide lyase 4 family.

The protein localises to the secreted. It catalyses the reaction Endotype eliminative cleavage of L-alpha-rhamnopyranosyl-(1-&gt;4)-alpha-D-galactopyranosyluronic acid bonds of rhamnogalacturonan I domains in ramified hairy regions of pectin leaving L-rhamnopyranose at the reducing end and 4-deoxy-4,5-unsaturated D-galactopyranosyluronic acid at the non-reducing end.. In terms of biological role, pectinolytic enzymes consist of four classes of enzymes: pectin lyase, polygalacturonase, pectin methylesterase and rhamnogalacturonase. Degrades the rhamnogalacturonan I (RG-I) backbone of pectin. In Aspergillus niger (strain ATCC MYA-4892 / CBS 513.88 / FGSC A1513), this protein is Probable rhamnogalacturonate lyase B (rglB).